A 289-amino-acid polypeptide reads, in one-letter code: Glycine--tRNA ligase alpha subunit (289 aa).

Belongs to the class-II aminoacyl-tRNA synthetase family. Tetramer of two alpha and two beta subunits.

The protein localises to the cytoplasm. The catalysed reaction is tRNA(Gly) + glycine + ATP = glycyl-tRNA(Gly) + AMP + diphosphate. This Rickettsia prowazekii (strain Madrid E) protein is Glycine--tRNA ligase alpha subunit (glyQ).